Here is a 192-residue protein sequence, read N- to C-terminus: MNYQIKRNTEETQLNISLANNGTQSHINTGVGFLDHMLTLFTFHSGLTLSIEATGDTYVDDHHITEDIGIVIGQLLLELIKTQQSFTRYGCSYVPMDEALARTVVDISGRPYFSFNSKLSAQKVGTFDTELVEEFFRALIINARLTVHIDLLRGGNTHHEIEAIFKSFARALKISLAQNEDGRIPSSKGVIE.

The protein belongs to the imidazoleglycerol-phosphate dehydratase family.

The protein localises to the cytoplasm. It carries out the reaction D-erythro-1-(imidazol-4-yl)glycerol 3-phosphate = 3-(imidazol-4-yl)-2-oxopropyl phosphate + H2O. The protein operates within amino-acid biosynthesis; L-histidine biosynthesis; L-histidine from 5-phospho-alpha-D-ribose 1-diphosphate: step 6/9. This chain is Imidazoleglycerol-phosphate dehydratase, found in Staphylococcus epidermidis (strain ATCC 35984 / DSM 28319 / BCRC 17069 / CCUG 31568 / BM 3577 / RP62A).